The sequence spans 308 residues: Tryptophan 2,3-dioxygenase (308 aa).

The segment at 1-37 is disordered; that stretch reads MKPPGDNAPAGCPFSGARAAQPAHEAPHVPGDAAGET. Residues 77–81, Tyr139, and Arg143 contribute to the substrate site; that span reads FIIQH. Position 266 (His266) interacts with heme. Position 280 (Thr280) interacts with substrate.

The protein belongs to the tryptophan 2,3-dioxygenase family. As to quaternary structure, homotetramer. Heme serves as cofactor.

It catalyses the reaction L-tryptophan + O2 = N-formyl-L-kynurenine. It functions in the pathway amino-acid degradation; L-tryptophan degradation via kynurenine pathway; L-kynurenine from L-tryptophan: step 1/2. Functionally, heme-dependent dioxygenase that catalyzes the oxidative cleavage of the L-tryptophan (L-Trp) pyrrole ring and converts L-tryptophan to N-formyl-L-kynurenine. Catalyzes the oxidative cleavage of the indole moiety. In Burkholderia ambifaria (strain MC40-6), this protein is Tryptophan 2,3-dioxygenase.